Consider the following 189-residue polypeptide: MDTEYEQVNKPWNELYKETTLGNKLTVNVGMEDQEVPLLPSNFLTKVRVGLSGGYITMRRIRIKIIPLVSRKAGVSGKLYLRDISDTKGRKLHCTESLDLGREIRLTMQHLDFSVSTRSDVPIVFGFEELVSPFLEGRELFSISVRWQFGLSKNCYSLPQSKWKVMYQEDALKVLKPSKKKASKTDSSV.

Belongs to the tombusvirus/aureusvirus movement protein p22 family. Interacts with host protein HFI22. In terms of processing, phosphorylated.

Its subcellular location is the host membrane. In terms of biological role, cell-to-cell movement. Displays RNA-binding activity. The protein is Movement protein p22 of Capsicum annuum (Capsicum pepper).